The sequence spans 333 residues: Holliday junction branch migration complex subunit RuvB (333 aa).

Residues 1-182 form a large ATPase domain (RuvB-L) region; the sequence is MDERLLSGES…FGVLSRLEYY (182 aa). Residues Leu21, Arg22, Gly63, Lys66, Thr67, Thr68, 129 to 131, Arg172, Tyr182, and Arg219 contribute to the ATP site; that span reads EDF. Thr67 contacts Mg(2+). Residues 183–253 are small ATPAse domain (RuvB-S); it reads TVDQLSEIVE…ITQMALELLQ (71 aa). Residues 256–333 are head domain (RuvB-H); that stretch reads KLGLDHIDHK…EHFGMEMPKV (78 aa). Positions 311 and 316 each coordinate DNA.

Belongs to the RuvB family. Homohexamer. Forms an RuvA(8)-RuvB(12)-Holliday junction (HJ) complex. HJ DNA is sandwiched between 2 RuvA tetramers; dsDNA enters through RuvA and exits via RuvB. An RuvB hexamer assembles on each DNA strand where it exits the tetramer. Each RuvB hexamer is contacted by two RuvA subunits (via domain III) on 2 adjacent RuvB subunits; this complex drives branch migration. In the full resolvosome a probable DNA-RuvA(4)-RuvB(12)-RuvC(2) complex forms which resolves the HJ.

It is found in the cytoplasm. It carries out the reaction ATP + H2O = ADP + phosphate + H(+). Its function is as follows. The RuvA-RuvB-RuvC complex processes Holliday junction (HJ) DNA during genetic recombination and DNA repair, while the RuvA-RuvB complex plays an important role in the rescue of blocked DNA replication forks via replication fork reversal (RFR). RuvA specifically binds to HJ cruciform DNA, conferring on it an open structure. The RuvB hexamer acts as an ATP-dependent pump, pulling dsDNA into and through the RuvAB complex. RuvB forms 2 homohexamers on either side of HJ DNA bound by 1 or 2 RuvA tetramers; 4 subunits per hexamer contact DNA at a time. Coordinated motions by a converter formed by DNA-disengaged RuvB subunits stimulates ATP hydrolysis and nucleotide exchange. Immobilization of the converter enables RuvB to convert the ATP-contained energy into a lever motion, pulling 2 nucleotides of DNA out of the RuvA tetramer per ATP hydrolyzed, thus driving DNA branch migration. The RuvB motors rotate together with the DNA substrate, which together with the progressing nucleotide cycle form the mechanistic basis for DNA recombination by continuous HJ branch migration. Branch migration allows RuvC to scan DNA until it finds its consensus sequence, where it cleaves and resolves cruciform DNA. The protein is Holliday junction branch migration complex subunit RuvB of Bacillus cereus (strain ATCC 10987 / NRS 248).